We begin with the raw amino-acid sequence, 625 residues long: FMRFamide-activated amiloride-sensitive sodium channel (625 aa).

At 1 to 67 the chain is on the cytoplasmic side; that stretch reads MKYTSAATKP…IVTSRDTKRK (67 aa). A helical transmembrane segment spans residues 68–89; it reads VIWALLVIAGFTAATLQLSLLV. The Extracellular segment spans residues 90–536; it reads RKYLQFQVVE…LADLFADIGG (447 aa). Asn-134, Asn-196, Asn-303, Asn-349, Asn-365, Asn-372, and Asn-473 each carry an N-linked (GlcNAc...) asparagine glycan. The chain crosses the membrane as a helical span at residues 537-557; sequence TLGLWMGISVLTIMELIELVI. The Cytoplasmic segment spans residues 558 to 625; the sequence is RLTGLVFNSE…DFRRGVESPV (68 aa). The disordered stretch occupies residues 570–591; sequence LPRGPTTVNNNNGSNNHSQSTS. Residues 575–591 show a composition bias toward low complexity; that stretch reads TTVNNNNGSNNHSQSTS.

Belongs to the amiloride-sensitive sodium channel (TC 1.A.6) family. As to expression, muscle and nervous tissue.

The protein resides in the membrane. FMRFamide-gated ionotropic receptor. The chain is FMRFamide-activated amiloride-sensitive sodium channel from Cornu aspersum (Brown garden snail).